The chain runs to 316 residues: Coiled-coil domain-containing protein 130 homolog (316 aa).

Positions 182–203 (ANSRLRAEFRQQKKEINGQQEL) form a coiled coil. The tract at residues 287 to 316 (KLEETTSSATNEKPISLVGDYSSSDNDSNG) is disordered.

The protein belongs to the CWC16 family.

The chain is Coiled-coil domain-containing protein 130 homolog from Drosophila melanogaster (Fruit fly).